Here is a 229-residue protein sequence, read N- to C-terminus: 2-phytyl-1,4-naphtoquinone methyltransferase (229 aa).

It belongs to the class I-like SAM-binding methyltransferase superfamily. MenG/UbiE family.

It catalyses the reaction demethylphylloquinol + S-adenosyl-L-methionine = phylloquinol + S-adenosyl-L-homocysteine + H(+). The protein operates within cofactor biosynthesis; phylloquinone biosynthesis. In terms of biological role, methyltransferase required for the conversion of 2-phytyl-1,4-beta-naphthoquinol to phylloquinol. The protein is 2-phytyl-1,4-naphtoquinone methyltransferase of Nostoc sp. (strain PCC 7120 / SAG 25.82 / UTEX 2576).